The chain runs to 430 residues: Serine--tRNA ligase (430 aa).

238–240 (TAE) is an L-serine binding site. Position 269 to 271 (269 to 271 (RRE)) interacts with ATP. L-serine is bound at residue Glu292. ATP is bound at residue 356 to 359 (EISS). Ser392 is a binding site for L-serine.

It belongs to the class-II aminoacyl-tRNA synthetase family. Type-1 seryl-tRNA synthetase subfamily. Homodimer. The tRNA molecule binds across the dimer.

It is found in the cytoplasm. It carries out the reaction tRNA(Ser) + L-serine + ATP = L-seryl-tRNA(Ser) + AMP + diphosphate + H(+). It catalyses the reaction tRNA(Sec) + L-serine + ATP = L-seryl-tRNA(Sec) + AMP + diphosphate + H(+). It participates in aminoacyl-tRNA biosynthesis; selenocysteinyl-tRNA(Sec) biosynthesis; L-seryl-tRNA(Sec) from L-serine and tRNA(Sec): step 1/1. In terms of biological role, catalyzes the attachment of serine to tRNA(Ser). Is also able to aminoacylate tRNA(Sec) with serine, to form the misacylated tRNA L-seryl-tRNA(Sec), which will be further converted into selenocysteinyl-tRNA(Sec). This Synechocystis sp. (strain ATCC 27184 / PCC 6803 / Kazusa) protein is Serine--tRNA ligase.